The following is a 58-amino-acid chain: Small ribosomal subunit protein bS21 (58 aa).

The segment at threonine 24–isoleucine 58 is disordered. Positions glutamate 31–serine 42 are enriched in basic and acidic residues. Residues valine 43 to isoleucine 58 show a composition bias toward basic residues.

Belongs to the bacterial ribosomal protein bS21 family.

The protein is Small ribosomal subunit protein bS21 of Streptococcus thermophilus (strain CNRZ 1066).